The primary structure comprises 297 residues: Tyrosine recombinase XerD (297 aa).

Residues 1–86 enclose the Core-binding (CB) domain; that stretch reads MNDLIDDFLH…SLRSFFHYLM (86 aa). Residues 107–291 enclose the Tyr recombinase domain; sequence SLPKVLNLDD…TKLRLKDVYK (185 aa). Active-site residues include Arg-147, Lys-171, His-243, Arg-246, and His-269. The active-site O-(3'-phospho-DNA)-tyrosine intermediate is Tyr-278.

This sequence belongs to the 'phage' integrase family. XerD subfamily. As to quaternary structure, forms a cyclic heterotetrameric complex composed of two molecules of XerC and two molecules of XerD.

The protein localises to the cytoplasm. Functionally, site-specific tyrosine recombinase, which acts by catalyzing the cutting and rejoining of the recombining DNA molecules. The XerC-XerD complex is essential to convert dimers of the bacterial chromosome into monomers to permit their segregation at cell division. It also contributes to the segregational stability of plasmids. The sequence is that of Tyrosine recombinase XerD from Listeria innocua serovar 6a (strain ATCC BAA-680 / CLIP 11262).